A 167-amino-acid chain; its full sequence is MPSQSACPVLSTAPGTPCDLRKHLLNMVSEEKRSPQLSAKTWRRGLRLQKRRNALFLPEGDICVVGSTSGARALIPETSKLERSGTVIAYCNLELLASSDPPVWASQSTGMTGMSYRSQPQLGFKSTPPAHSSVFHHSVKAPKEDQAQEAASRPLTSQDGWNPNIKK.

The tract at residues 115–167 (SYRSQPQLGFKSTPPAHSSVFHHSVKAPKEDQAQEAASRPLTSQDGWNPNIKK) is disordered.

This is an uncharacterized protein from Homo sapiens (Human).